Consider the following 281-residue polypeptide: 3-methyl-2-oxobutanoate hydroxymethyltransferase (281 aa).

Positions 1–20 are disordered; that stretch reads MSEQTIYGANTPGGSGPRTK. The Mg(2+) site is built by Asp62 and Asp101. Residues 62–63, Asp101, and Lys131 contribute to the 3-methyl-2-oxobutanoate site; that span reads DS. Residue Glu133 coordinates Mg(2+). Glu199 acts as the Proton acceptor in catalysis.

The protein belongs to the PanB family. As to quaternary structure, homodecamer; pentamer of dimers. The cofactor is Mg(2+).

It localises to the cytoplasm. It carries out the reaction 3-methyl-2-oxobutanoate + (6R)-5,10-methylene-5,6,7,8-tetrahydrofolate + H2O = 2-dehydropantoate + (6S)-5,6,7,8-tetrahydrofolate. Its pathway is cofactor biosynthesis; (R)-pantothenate biosynthesis; (R)-pantoate from 3-methyl-2-oxobutanoate: step 1/2. In terms of biological role, catalyzes the reversible reaction in which hydroxymethyl group from 5,10-methylenetetrahydrofolate is transferred onto alpha-ketoisovalerate to form ketopantoate. The chain is 3-methyl-2-oxobutanoate hydroxymethyltransferase from Mycobacterium bovis (strain ATCC BAA-935 / AF2122/97).